Consider the following 155-residue polypeptide: Small ribosomal subunit protein bS6 (155 aa).

Residues Glu-94–Val-155 are disordered.

Belongs to the bacterial ribosomal protein bS6 family.

In terms of biological role, binds together with bS18 to 16S ribosomal RNA. In Rhizobium leguminosarum bv. trifolii (strain WSM2304), this protein is Small ribosomal subunit protein bS6.